The chain runs to 175 residues: Large ribosomal subunit protein uL10 (175 aa).

Belongs to the universal ribosomal protein uL10 family. In terms of assembly, part of the ribosomal stalk of the 50S ribosomal subunit. The N-terminus interacts with L11 and the large rRNA to form the base of the stalk. The C-terminus forms an elongated spine to which L12 dimers bind in a sequential fashion forming a multimeric L10(L12)X complex.

Functionally, forms part of the ribosomal stalk, playing a central role in the interaction of the ribosome with GTP-bound translation factors. In Synechococcus sp. (strain CC9902), this protein is Large ribosomal subunit protein uL10.